The following is a 382-amino-acid chain: Alcohol dehydrogenase 1 (382 aa).

Zn(2+)-binding residues include cysteine 49, threonine 51, histidine 71, cysteine 101, cysteine 104, cysteine 107, cysteine 115, and cysteine 179. An alcohol contacts are provided by threonine 51 and histidine 71. Residue threonine 51 coordinates NAD(+). Residues glycine 204 to glycine 209, aspartate 228, arginine 233, threonine 275, valine 298, valine 298 to valine 300, phenylalanine 325, and arginine 375 contribute to the NAD(+) site.

The protein belongs to the zinc-containing alcohol dehydrogenase family. As to quaternary structure, homodimer. The cofactor is Zn(2+).

It localises to the cytoplasm. It carries out the reaction a primary alcohol + NAD(+) = an aldehyde + NADH + H(+). The catalysed reaction is a secondary alcohol + NAD(+) = a ketone + NADH + H(+). In terms of biological role, this protein is responsible for the conversion of alcohols to aldehydes in plants and is important for NAD metabolism during anaerobic respiration. This is Alcohol dehydrogenase 1 (ADH1) from Petunia hybrida (Petunia).